Here is a 107-residue protein sequence, read N- to C-terminus: UPF0145 protein MAB_3451c (107 aa).

Belongs to the UPF0145 family.

The polypeptide is UPF0145 protein MAB_3451c (Mycobacteroides abscessus (strain ATCC 19977 / DSM 44196 / CCUG 20993 / CIP 104536 / JCM 13569 / NCTC 13031 / TMC 1543 / L948) (Mycobacterium abscessus)).